The following is a 326-amino-acid chain: (+)-T-muurolol synthase ((2E,6E)-farnesyl diphosphate cyclizing) (326 aa).

Positions 81 and 85 each coordinate Mg(2+). Residues 81–85 carry the DDXXD motif motif; that stretch reads DDQCD. R175 contributes to the substrate binding site. Mg(2+) is bound by residues N221 and S225. K228 lines the substrate pocket. E229 is a binding site for Mg(2+). 309 to 310 is a binding site for substrate; it reads RY.

This sequence belongs to the terpene synthase family. The cofactor is Mg(2+).

The enzyme catalyses (2E,6E)-farnesyl diphosphate + H2O = (+)-T-muurolol + diphosphate. The protein operates within secondary metabolite biosynthesis; terpenoid biosynthesis. Functionally, catalyzes the conversion of (2E,6E)-farnesyl diphosphate (FPP) into (+)-T-muurolol via a 1,10-cyclization, which requires isomerization of FPP to nerolidyl diphosphate (NPP) and then abstraction of the pyrophosphate from intermediate NPP leading to a (E,Z)-germacradienyl (helminthogermacradienyl) cation. In Roseiflexus castenholzii (strain DSM 13941 / HLO8), this protein is (+)-T-muurolol synthase ((2E,6E)-farnesyl diphosphate cyclizing).